Reading from the N-terminus, the 175-residue chain is Putative lipoprotein LppP (175 aa).

The N-terminal stretch at 1–30 (MRRQRSAVPILALLALLALLALIVGLGASG) is a signal peptide. The N-palmitoyl cysteine moiety is linked to residue Cys31. Cys31 carries the S-diacylglycerol cysteine lipid modification.

It is found in the cell membrane. The chain is Putative lipoprotein LppP (lppP) from Mycobacterium bovis (strain ATCC BAA-935 / AF2122/97).